Here is a 357-residue protein sequence, read N- to C-terminus: 4-hydroxy-3-methylbut-2-en-1-yl diphosphate synthase (flavodoxin) (357 aa).

[4Fe-4S] cluster contacts are provided by Cys-265, Cys-268, Cys-300, and Glu-307.

This sequence belongs to the IspG family. In terms of assembly, homodimer. Requires [4Fe-4S] cluster as cofactor.

It carries out the reaction (2E)-4-hydroxy-3-methylbut-2-enyl diphosphate + oxidized [flavodoxin] + H2O + 2 H(+) = 2-C-methyl-D-erythritol 2,4-cyclic diphosphate + reduced [flavodoxin]. The protein operates within isoprenoid biosynthesis; isopentenyl diphosphate biosynthesis via DXP pathway; isopentenyl diphosphate from 1-deoxy-D-xylulose 5-phosphate: step 5/6. Converts 2C-methyl-D-erythritol 2,4-cyclodiphosphate (ME-2,4cPP) into 1-hydroxy-2-methyl-2-(E)-butenyl 4-diphosphate. The chain is 4-hydroxy-3-methylbut-2-en-1-yl diphosphate synthase (flavodoxin) from Aquifex aeolicus (strain VF5).